The chain runs to 326 residues: Thioredoxin reductase (326 aa).

55–62 (EGPEPGGQ) contributes to the FAD binding site. Cys-156 and Cys-159 are joined by a disulfide. Residue 298 to 307 (DVSNKLYAQA) coordinates FAD.

It belongs to the class-II pyridine nucleotide-disulfide oxidoreductase family. As to quaternary structure, homodimer. Requires FAD as cofactor.

The protein localises to the cytoplasm. It catalyses the reaction [thioredoxin]-dithiol + NADP(+) = [thioredoxin]-disulfide + NADPH + H(+). The chain is Thioredoxin reductase (trxB) from Borreliella burgdorferi (strain ATCC 35210 / DSM 4680 / CIP 102532 / B31) (Borrelia burgdorferi).